We begin with the raw amino-acid sequence, 452 residues long: Pup--protein ligase (452 aa).

Glu-9 contacts Mg(2+). Arg-53 serves as a coordination point for ATP. Tyr-55 serves as a coordination point for Mg(2+). The active-site Proton acceptor is the Asp-57. Glu-63 is a binding site for Mg(2+). Residues Thr-66 and Trp-419 each contribute to the ATP site.

It belongs to the Pup ligase/Pup deamidase family. Pup-conjugating enzyme subfamily.

It carries out the reaction ATP + [prokaryotic ubiquitin-like protein]-L-glutamate + [protein]-L-lysine = ADP + phosphate + N(6)-([prokaryotic ubiquitin-like protein]-gamma-L-glutamyl)-[protein]-L-lysine.. The protein operates within protein degradation; proteasomal Pup-dependent pathway. It participates in protein modification; protein pupylation. Its function is as follows. Catalyzes the covalent attachment of the prokaryotic ubiquitin-like protein modifier Pup to the proteasomal substrate proteins, thereby targeting them for proteasomal degradation. This tagging system is termed pupylation. The ligation reaction involves the side-chain carboxylate of the C-terminal glutamate of Pup and the side-chain amino group of a substrate lysine. This is Pup--protein ligase from Mycobacterium tuberculosis (strain KZN 1435 / MDR).